We begin with the raw amino-acid sequence, 370 residues long: Sphingolipid delta(4)-desaturase (370 aa).

Transmembrane regions (helical) follow at residues 68 to 88 (VMGVVLLQLGIAYYLRHTPVF), 92 to 112 (FLTLAYVIGATANQAIFLAIH), and 128 to 148 (LFAVFANIPIGVPYSASFQPY). Residues 112–116 (HELSH) carry the Histidine box-1 motif. Positions 149–153 (HQLHH) match the Histidine box-2 motif. A run of 3 helical transmembrane segments spans residues 173-193 (FLSSMPGKLFFAIFQIFFYAL), 197-217 (FITQIKFTYVHLVNVVFQLIF), and 220-240 (VMVTCWGWKALGYFIVSTFLA). A Histidine box-3 motif is present at residues 299–303 (HNEHH).

The protein belongs to the fatty acid desaturase type 1 family. DEGS subfamily.

The protein resides in the membrane. The catalysed reaction is an N-acylsphinganine + 2 Fe(II)-[cytochrome b5] + O2 + 2 H(+) = an N-acylsphing-4-enine + 2 Fe(III)-[cytochrome b5] + 2 H2O. It participates in lipid metabolism; sphingolipid metabolism. Functionally, delta(4)-fatty-acid desaturase which introduces a double bond at the 4-position in the long-chain base (LCB) of ceramides. Required for the formation of the monounsaturated sphingoid base (E)-sphing-4-enine during glucosylceramide (GluCer) biosynthesis. The sequence is that of Sphingolipid delta(4)-desaturase from Candida albicans (strain SC5314 / ATCC MYA-2876) (Yeast).